A 940-amino-acid polypeptide reads, in one-letter code: Isoleucine--tRNA ligase (940 aa).

A 'HIGH' region motif is present at residues 58-68; the sequence is PYANGSIHIGH. Residue Glu-564 coordinates L-isoleucyl-5'-AMP. The 'KMSKS' region signature appears at 605 to 609; that stretch reads KMSKS. An ATP-binding site is contributed by Lys-608. 4 residues coordinate Zn(2+): Cys-903, Cys-906, Cys-923, and Cys-926.

This sequence belongs to the class-I aminoacyl-tRNA synthetase family. IleS type 1 subfamily. Monomer. The cofactor is Zn(2+).

The protein localises to the cytoplasm. The enzyme catalyses tRNA(Ile) + L-isoleucine + ATP = L-isoleucyl-tRNA(Ile) + AMP + diphosphate. Its function is as follows. Catalyzes the attachment of isoleucine to tRNA(Ile). As IleRS can inadvertently accommodate and process structurally similar amino acids such as valine, to avoid such errors it has two additional distinct tRNA(Ile)-dependent editing activities. One activity is designated as 'pretransfer' editing and involves the hydrolysis of activated Val-AMP. The other activity is designated 'posttransfer' editing and involves deacylation of mischarged Val-tRNA(Ile). This Shewanella sp. (strain W3-18-1) protein is Isoleucine--tRNA ligase.